The chain runs to 410 residues: Imidazolonepropionase (410 aa).

Positions 73 and 75 each coordinate Fe(3+). Zn(2+) contacts are provided by His73 and His75. Residues Arg82, Tyr145, and His178 each contribute to the 4-imidazolone-5-propanoate site. An N-formimidoyl-L-glutamate-binding site is contributed by Tyr145. His243 provides a ligand contact to Fe(3+). Residue His243 participates in Zn(2+) binding. 4-imidazolone-5-propanoate is bound at residue Gln246. Fe(3+) is bound at residue Asp318. Residue Asp318 coordinates Zn(2+). Residues Asn320 and Gly322 each coordinate N-formimidoyl-L-glutamate. Ser323 is a 4-imidazolone-5-propanoate binding site.

Belongs to the metallo-dependent hydrolases superfamily. HutI family. The cofactor is Zn(2+). It depends on Fe(3+) as a cofactor.

It localises to the cytoplasm. The enzyme catalyses 4-imidazolone-5-propanoate + H2O = N-formimidoyl-L-glutamate. Its pathway is amino-acid degradation; L-histidine degradation into L-glutamate; N-formimidoyl-L-glutamate from L-histidine: step 3/3. Catalyzes the hydrolytic cleavage of the carbon-nitrogen bond in imidazolone-5-propanoate to yield N-formimidoyl-L-glutamate. It is the third step in the universal histidine degradation pathway. In Shewanella baltica (strain OS223), this protein is Imidazolonepropionase.